A 259-amino-acid polypeptide reads, in one-letter code: tRNA pseudouridine synthase A (259 aa).

The active-site Nucleophile is the aspartate 52. Tyrosine 113 contributes to the substrate binding site.

It belongs to the tRNA pseudouridine synthase TruA family. In terms of assembly, homodimer.

The catalysed reaction is uridine(38/39/40) in tRNA = pseudouridine(38/39/40) in tRNA. Its function is as follows. Formation of pseudouridine at positions 38, 39 and 40 in the anticodon stem and loop of transfer RNAs. This chain is tRNA pseudouridine synthase A, found in Allorhizobium ampelinum (strain ATCC BAA-846 / DSM 112012 / S4) (Agrobacterium vitis (strain S4)).